The sequence spans 110 residues: DNA-binding protein Pars_1791 (110 aa).

This sequence belongs to the PDCD5 family.

In Pyrobaculum arsenaticum (strain DSM 13514 / JCM 11321 / PZ6), this protein is DNA-binding protein Pars_1791.